A 173-amino-acid chain; its full sequence is NADH-ubiquinone oxidoreductase chain 6 (173 aa).

5 consecutive transmembrane segments (helical) span residues 1-21 (MTYL…AVAS), 24-44 (APYF…GVLV), 53-73 (LVLF…SAAL), 86-106 (SVVG…GVFW), and 139-159 (YGGG…FVVL).

It belongs to the complex I subunit 6 family.

The protein localises to the mitochondrion membrane. The catalysed reaction is a ubiquinone + NADH + 5 H(+)(in) = a ubiquinol + NAD(+) + 4 H(+)(out). Core subunit of the mitochondrial membrane respiratory chain NADH dehydrogenase (Complex I) that is believed to belong to the minimal assembly required for catalysis. Complex I functions in the transfer of electrons from NADH to the respiratory chain. The immediate electron acceptor for the enzyme is believed to be ubiquinone. The polypeptide is NADH-ubiquinone oxidoreductase chain 6 (MT-ND6) (Formosania lacustris (Oriental stream loach)).